Consider the following 343-residue polypeptide: UDP-N-acetylglucosamine--N-acetylmuramyl-(pentapeptide) pyrophosphoryl-undecaprenol N-acetylglucosamine transferase (343 aa).

UDP-N-acetyl-alpha-D-glucosamine contacts are provided by residues 10 to 12 (TGG), Asn113, Ser174, and Gln275.

This sequence belongs to the glycosyltransferase 28 family. MurG subfamily.

The protein resides in the cell membrane. The catalysed reaction is di-trans,octa-cis-undecaprenyl diphospho-N-acetyl-alpha-D-muramoyl-L-alanyl-D-glutamyl-meso-2,6-diaminopimeloyl-D-alanyl-D-alanine + UDP-N-acetyl-alpha-D-glucosamine = di-trans,octa-cis-undecaprenyl diphospho-[N-acetyl-alpha-D-glucosaminyl-(1-&gt;4)]-N-acetyl-alpha-D-muramoyl-L-alanyl-D-glutamyl-meso-2,6-diaminopimeloyl-D-alanyl-D-alanine + UDP + H(+). Its pathway is cell wall biogenesis; peptidoglycan biosynthesis. Functionally, cell wall formation. Catalyzes the transfer of a GlcNAc subunit on undecaprenyl-pyrophosphoryl-MurNAc-pentapeptide (lipid intermediate I) to form undecaprenyl-pyrophosphoryl-MurNAc-(pentapeptide)GlcNAc (lipid intermediate II). The chain is UDP-N-acetylglucosamine--N-acetylmuramyl-(pentapeptide) pyrophosphoryl-undecaprenol N-acetylglucosamine transferase from Wolbachia sp. subsp. Brugia malayi (strain TRS).